Reading from the N-terminus, the 349-residue chain is D-arabinitol dehydrogenase 1 (349 aa).

7 residues coordinate Zn(2+): C46, H67, C97, C100, C103, C111, and E151.

It belongs to the zinc-containing alcohol dehydrogenase family. The cofactor is Zn(2+).

Its subcellular location is the cell projection. The enzyme catalyses D-arabinitol + NADP(+) = D-xylulose + NADPH + H(+). It catalyses the reaction D-arabinitol + NADP(+) = D-ribulose + NADPH + H(+). Its function is as follows. D-arabinitol dehydrogenase which mostly produces D-arabinitol in haustoria, the appendages of the parasitic fungus that penetrate the host's tissue and draws nutrients from it. D-arabinitol accumulation may serve as a carbohydrate storage compound. D-arabinitol is also capable of quenching reactive oxygen species involved in host plant defense reactions, thus providing protection for the rust fungus during the pathogenic interaction. This chain is D-arabinitol dehydrogenase 1 (ARD1), found in Uromyces fabae (Rust fungus).